The sequence spans 318 residues: Transaldolase (318 aa).

K132 serves as the catalytic Schiff-base intermediate with substrate.

The protein belongs to the transaldolase family. Type 1 subfamily. In terms of assembly, homodimer.

It is found in the cytoplasm. It carries out the reaction D-sedoheptulose 7-phosphate + D-glyceraldehyde 3-phosphate = D-erythrose 4-phosphate + beta-D-fructose 6-phosphate. Its pathway is carbohydrate degradation; pentose phosphate pathway; D-glyceraldehyde 3-phosphate and beta-D-fructose 6-phosphate from D-ribose 5-phosphate and D-xylulose 5-phosphate (non-oxidative stage): step 2/3. In terms of biological role, transaldolase is important for the balance of metabolites in the pentose-phosphate pathway. In Shewanella piezotolerans (strain WP3 / JCM 13877), this protein is Transaldolase.